The sequence spans 175 residues: MSTKKKSIIKCIDWRSIEEPDLPLEVAGWLMEAGSMTERFERHCHKIIIDLKHEGFIEHQALSDEKELLPESPRYWIREVVMCADDEPWLLGRTVIPQDTLSGPEHALLNLGKTPLGRYLFSSKDLKRDYIQTGRQGDLWARRSLLQLSNKPLLLTEVFLPASPLYCHSRNTKLA.

Residues methionine 36, arginine 78, leucine 116, and glutamate 157 each coordinate substrate.

Belongs to the UbiC family. Monomer.

The protein resides in the cytoplasm. It carries out the reaction chorismate = 4-hydroxybenzoate + pyruvate. The protein operates within cofactor biosynthesis; ubiquinone biosynthesis. Its function is as follows. Removes the pyruvyl group from chorismate, with concomitant aromatization of the ring, to provide 4-hydroxybenzoate (4HB) for the ubiquinone pathway. The sequence is that of Chorismate pyruvate-lyase from Hamiltonella defensa subsp. Acyrthosiphon pisum (strain 5AT).